The sequence spans 160 residues: Cytochrome b6-f complex subunit 4 (160 aa).

Transmembrane regions (helical) follow at residues leucine 36 to valine 56, leucine 95 to glutamate 115, and threonine 131 to leucine 151.

This sequence belongs to the cytochrome b family. PetD subfamily. As to quaternary structure, the 4 large subunits of the cytochrome b6-f complex are cytochrome b6, subunit IV (17 kDa polypeptide, PetD), cytochrome f and the Rieske protein, while the 4 small subunits are PetG, PetL, PetM and PetN. The complex functions as a dimer.

The protein localises to the cellular thylakoid membrane. Component of the cytochrome b6-f complex, which mediates electron transfer between photosystem II (PSII) and photosystem I (PSI), cyclic electron flow around PSI, and state transitions. This Nostoc punctiforme (strain ATCC 29133 / PCC 73102) protein is Cytochrome b6-f complex subunit 4.